Here is a 1032-residue protein sequence, read N- to C-terminus: Vacuolar membrane protease (1032 aa).

The Cytoplasmic segment spans residues 1–11 (MKLGNPFVFRP). The helical transmembrane segment at 12-32 (GPVSFWTTIVYLAIIIPLIYV) threads the bilayer. The Vacuolar portion of the chain corresponds to 33 to 415 (QETVPPAPSE…SAFALRGLFA (383 aa)). Asn-50, Asn-138, and Asn-147 each carry an N-linked (GlcNAc...) asparagine glycan. 2 residues coordinate Zn(2+): His-194 and Asp-206. Glu-240 functions as the Proton acceptor in the catalytic mechanism. Zn(2+) is bound by residues Glu-241, Glu-266, and His-339. The helical transmembrane segment at 416-436 (WTLTLLITTPLVLFVVTYLLV) threads the bilayer. Over 437-469 (RDDKWYFFATKVDSTVGDGEETVSFGGWKGFVR) the chain is Cytoplasmic. The helical transmembrane segment at 470-490 (FPFALVVATALTIGSVFLLAK) threads the bilayer. Topologically, residues 491–493 (VNP) are vacuolar. The chain crosses the membrane as a helical span at residues 494–514 (LIIYSSGYSVWAMMISLFYFV). The Cytoplasmic portion of the chain corresponds to 515-532 (SWLLLRGAHFVRPSALQR). Residues 533-553 (GFTLIWLFIITWVLSVFAAVA) form a helical membrane-spanning segment. Residues 554–560 (EDRMNMG) lie on the Vacuolar side of the membrane. Residues 561 to 581 (AVYPLAFLHTFAFAAVLISLL) traverse the membrane as a helical segment. The Cytoplasmic portion of the chain corresponds to 582–701 (EQYALPAKQD…WSGRLPTWTW (120 aa)). The interval 595 to 688 (QVSGENEEEE…RKRSFPPYEN (94 aa)) is disordered. The span at 599 to 608 (ENEEEEEQEQ) shows a compositional bias: acidic residues. Residues 651–660 (SSEQTTTFAN) show a composition bias toward polar residues. A helical membrane pass occupies residues 702 to 722 (FIQLLLLVPLYVTVLGNLALV). Residues 723 to 738 (QTTSIGKTGTDGSSLL) lie on the Vacuolar side of the membrane. Residues 739–759 (APLMGVGILAILLLLPLTPFI) traverse the membrane as a helical segment. Over 760-766 (HRVSHHV) the chain is Cytoplasmic. A helical transmembrane segment spans residues 767 to 787 (PLFLFLVFIGTLIYNLTAFPF). Over 788–1032 (SDNNRFKFYF…VEITKKIKVA (245 aa)) the chain is Vacuolar. Asn-940 is a glycosylation site (N-linked (GlcNAc...) asparagine).

Belongs to the peptidase M28 family. The cofactor is Zn(2+).

The protein localises to the vacuole membrane. Functionally, may be involved in vacuolar sorting and osmoregulation. This Metarhizium robertsii (strain ARSEF 23 / ATCC MYA-3075) (Metarhizium anisopliae (strain ARSEF 23)) protein is Vacuolar membrane protease.